A 146-amino-acid polypeptide reads, in one-letter code: Ribosome-binding factor A (146 aa).

Residues 125–146 (RDLDADDDKTKDDRAKDDKDSE) are disordered.

It belongs to the RbfA family. Monomer. Binds 30S ribosomal subunits, but not 50S ribosomal subunits or 70S ribosomes.

It is found in the cytoplasm. One of several proteins that assist in the late maturation steps of the functional core of the 30S ribosomal subunit. Associates with free 30S ribosomal subunits (but not with 30S subunits that are part of 70S ribosomes or polysomes). Required for efficient processing of 16S rRNA. May interact with the 5'-terminal helix region of 16S rRNA. The protein is Ribosome-binding factor A of Mesorhizobium japonicum (strain LMG 29417 / CECT 9101 / MAFF 303099) (Mesorhizobium loti (strain MAFF 303099)).